The sequence spans 408 residues: Imidazolonepropionase (408 aa).

The Fe(3+) site is built by H74 and H76. The Zn(2+) site is built by H74 and H76. Residues R83, Y146, and H179 each contribute to the 4-imidazolone-5-propanoate site. Y146 contributes to the N-formimidoyl-L-glutamate binding site. H244 serves as a coordination point for Fe(3+). H244 contributes to the Zn(2+) binding site. Residue Q247 coordinates 4-imidazolone-5-propanoate. Residue D319 coordinates Fe(3+). D319 is a binding site for Zn(2+). N-formimidoyl-L-glutamate-binding residues include N321 and G323. A 4-imidazolone-5-propanoate-binding site is contributed by T324.

This sequence belongs to the metallo-dependent hydrolases superfamily. HutI family. It depends on Zn(2+) as a cofactor. Requires Fe(3+) as cofactor.

Its subcellular location is the cytoplasm. It catalyses the reaction 4-imidazolone-5-propanoate + H2O = N-formimidoyl-L-glutamate. The protein operates within amino-acid degradation; L-histidine degradation into L-glutamate; N-formimidoyl-L-glutamate from L-histidine: step 3/3. Catalyzes the hydrolytic cleavage of the carbon-nitrogen bond in imidazolone-5-propanoate to yield N-formimidoyl-L-glutamate. It is the third step in the universal histidine degradation pathway. This Ralstonia nicotianae (strain ATCC BAA-1114 / GMI1000) (Ralstonia solanacearum) protein is Imidazolonepropionase.